The primary structure comprises 370 residues: Chaperone protein DnaJ (370 aa).

In terms of domain architecture, J spans 5 to 69 (DYYEVLGVDR…QKKAHYDQFG (65 aa)). The segment at 128–210 (GKETTIEIPR…CGGKGKVRKR (83 aa)) adopts a CR-type zinc-finger fold. Zn(2+)-binding residues include C141, C144, C158, C161, C184, C187, C198, and C201. CXXCXGXG motif repeat units lie at residues 141-148 (CHTCSGSG), 158-165 (CPHCGGSG), 184-191 (CHHCEGTG), and 198-205 (CATCGGKG).

The protein belongs to the DnaJ family. Homodimer. It depends on Zn(2+) as a cofactor.

It is found in the cytoplasm. Its function is as follows. Participates actively in the response to hyperosmotic and heat shock by preventing the aggregation of stress-denatured proteins and by disaggregating proteins, also in an autonomous, DnaK-independent fashion. Unfolded proteins bind initially to DnaJ; upon interaction with the DnaJ-bound protein, DnaK hydrolyzes its bound ATP, resulting in the formation of a stable complex. GrpE releases ADP from DnaK; ATP binding to DnaK triggers the release of the substrate protein, thus completing the reaction cycle. Several rounds of ATP-dependent interactions between DnaJ, DnaK and GrpE are required for fully efficient folding. Also involved, together with DnaK and GrpE, in the DNA replication of plasmids through activation of initiation proteins. The chain is Chaperone protein DnaJ from Halalkalibacterium halodurans (strain ATCC BAA-125 / DSM 18197 / FERM 7344 / JCM 9153 / C-125) (Bacillus halodurans).